The following is a 103-amino-acid chain: Large ribosomal subunit protein eL21 (103 aa).

This sequence belongs to the eukaryotic ribosomal protein eL21 family.

The sequence is that of Large ribosomal subunit protein eL21 from Sulfolobus acidocaldarius (strain ATCC 33909 / DSM 639 / JCM 8929 / NBRC 15157 / NCIMB 11770).